Consider the following 506-residue polypeptide: Protein MGF 505-4R (506 aa).

It belongs to the asfivirus MGF 505 family.

Functionally, plays a role in virus cell tropism, and may be required for efficient virus replication in macrophages. The polypeptide is Protein MGF 505-4R (Ornithodoros (relapsing fever ticks)).